The following is a 172-amino-acid chain: Centrin-2 (172 aa).

Polar residues predominate over residues 1–14 (MASNFKKTTMASSA). The segment at 1 to 31 (MASNFKKTTMASSAQRKRMSPKPELTEDQKQ) is disordered. An N-acetylalanine modification is found at Ala-2. The interval 2–25 (ASNFKKTTMASSAQRKRMSPKPEL) is required for self-assembly. Ser-20 carries the phosphoserine modification. Residue Lys-22 forms a Glycyl lysine isopeptide (Lys-Gly) (interchain with G-Cter in SUMO2) linkage. Thr-26 carries the post-translational modification Phosphothreonine. 4 EF-hand domains span residues 28 to 63 (DQKQEIREAFDLFDADGTGTIDIKELKVAMRALGFE), 64 to 99 (PKKEEIKKMISEIDKEGTGKMNFSDFLTVMTQKMSE), 101 to 136 (DTKEEILKAFKLFDDDETGKISFKNLKRVAKELGEN), and 137 to 172 (LTDEELQEMIDEADRDGDGEVNEQEFLRIMKKTSLY). Positions 41, 43, 45, 47, and 52 each coordinate Ca(2+). Positions 150, 152, 154, 156, and 161 each coordinate Ca(2+).

This sequence belongs to the centrin family. Monomer. Homooligomer. Interacts with CCP110, SFI1. Component of the XPC complex composed of XPC, RAD23B and CETN2. Component of the nuclear pore complex (NPC)-associated TREX-2 complex (transcription and export complex 2), composed of at least GANP, 2 copies of ENY2, PCID2, SEM1/DSS1, and either centrin CETN2 or centrin CETN3. The TREX-2 complex also associates with ALYREF/ALY and with the nucleoporin NUP153. Interacts with USP49. Forms a microtubule-associated complex with POC5, POC1B and FAM161A. Interacts with CCDC15. Ubiquitously expressed in all adult tissues tested, with strongest expression in brain, spleen, kidney, small intestine and ovary. Also expressed in the NIH 3T3 fibroblast cell line and peripheral blood lymphocytes.

It is found in the cytoplasm. The protein localises to the cytoskeleton. Its subcellular location is the microtubule organizing center. It localises to the centrosome. The protein resides in the centriole. It is found in the nucleus. The protein localises to the nucleus envelope. Its subcellular location is the nuclear pore complex. Functionally, plays a fundamental role in microtubule organizing center structure and function. Required for centriole duplication and correct spindle formation. Has a role in regulating cytokinesis and genome stability via cooperation with CALM1 and CCP110. Its function is as follows. Involved in global genome nucleotide excision repair (GG-NER) by acting as component of the XPC complex. Cooperatively with Rad23b appears to stabilize Xpc. In vitro, stimulates DNA binding of the Xpc:Rad23b dimer. The XPC complex is proposed to represent the first factor bound at the sites of DNA damage and together with other core recognition factors, Xpa, RPA and the TFIIH complex, is part of the pre-incision (or initial recognition) complex. The XPC complex recognizes a wide spectrum of damaged DNA characterized by distortions of the DNA helix such as single-stranded loops, mismatched bubbles or single-stranded overhangs. The orientation of XPC complex binding appears to be crucial for inducing a productive NER. XPC complex is proposed to recognize and to interact with unpaired bases on the undamaged DNA strand which is followed by recruitment of the TFIIH complex and subsequent scanning for lesions in the opposite strand in a 5'-to-3' direction by the NER machinery. Cyclobutane pyrimidine dimers (CPDs) which are formed upon UV-induced DNA damage esacpe detection by the XPC complex due to a low degree of structural perurbation. Instead they are detected by the UV-DDB complex which in turn recruits and cooperates with the XPC complex in the respective DNA repair. In terms of biological role, as a component of the TREX-2 complex, involved in the export of mRNAs to the cytoplasm through the nuclear pores. The protein is Centrin-2 (Cetn2) of Mus musculus (Mouse).